The following is a 470-amino-acid chain: FAD-dependent monooxygenase nvfK (470 aa).

Positions 1–23 (MEKAKFKVVIVGGSITGLTLAHC) are cleaved as a signal peptide. 3 residues coordinate FAD: Glu35, Gly49, and Arg108. Asn121 carries N-linked (GlcNAc...) asparagine glycosylation. Tyr216 is a catalytic residue. Asp308 and Ala321 together coordinate FAD. The chain crosses the membrane as a helical span at residues 450–470 (ILMSIVLVAPAWVYIFSSLVW).

This sequence belongs to the paxM FAD-dependent monooxygenase family. The cofactor is FAD.

It is found in the membrane. It catalyses the reaction (3R)-3-farnesyl-6-hydroxy-2,3,5-trimethyl-4-oxocyclohexa-1,5-diene-1-carboxylate + 2-oxoglutarate + O2 = (3R)-[(10S)-11-epoxyfarnesyl]-2,3,5-trimethyl-6-oxido-4-oxocyclohexa-1,5-diene-1-carboxylate + succinate + CO2. It functions in the pathway secondary metabolite biosynthesis; terpenoid biosynthesis. FAD-dependent monooxygenase; part of the gene cluster that mediates the biosynthesis of novofumigatonin, a heavily oxygenated meroterpenoid containing a unique orthoester moiety. The first step of the pathway is the synthesis of 3,5-dimethylorsellinic acid (DMOA) by the polyketide synthase nvfA via condensation of one acetyl-CoA starter unit with 3 malonyl-CoA units and 2 methylations. DMOA is then converted to farnesyl-DMOA by the farnesyltransferase nvfB. Epoxydation by FAD-dependent monooxygenase nvfK, followed by a protonation-initiated cyclization catalyzed by the terpene cyclase nvfL leads to the production of asnavolin H. The short chain dehydrogenase nvfC then as a 3-OH dehydrogenase of asnovolin H to yield chemesin D. There are two branches to synthesize asnovolin A from chemesin D. In one branch, chemesin D undergoes Baeyer-Villiger oxidation by nvfH, methylation by nvfJ, and enoyl reduction by the nvfM D enoylreductase that reduces the double bond between C-5'and C-6', to form respectively asnovolin I, asnovolin K, and asnovolin A. In the other branch, the methylation precedes the Baeyer-Villiger oxidation and the enoyl reduction to yield asnovolin A via the asnovolin J intermediate. Asnovolin A is further converted to fumigatonoid A by the Fe(II)/2-oxoglutarate-dependent dioxygenase nvfI that catalyzes an endoperoxidation reaction. The alpha/beta hydrolase nvfD then acts as an epimerase that converts fumigatonoid A to its C-5' epimer, which then undergoes spontaneous or nvfD-catalyzed lactonization. The following step utilizes the ketoreductase nvfG to produce fumigatonoid B. The dioxygenase nvfE further converts fumigatonoid B into fumigatonoid C. Finally the Fe(II)/2-oxoglutarate-dependent dioxygenase nvfF catalyzes two rounds of oxidation to transform fumigatonoid C into the end product, novofumigatonin A. The sequence is that of FAD-dependent monooxygenase nvfK from Aspergillus novofumigatus (strain IBT 16806).